The primary structure comprises 478 residues: MASTAATAALSIIKSTGGAAVTRSSRASFGHIPSTSVSARRLGFSAVVDSRFSVHVASKVHSVRGKGARGVITMAKKSVGDLNSVDLKGKKVFVRADLNVPLDDNQNITDDTRIRAAIPTIKFLIENGAKVILSTHLGRPKGVTPKFSLAPLVPRLSELLGIEVVKADDCIGPEVETLVASLPEGGVLLLENVRFYKEEEKNEPDFAKKLASLADLYVNDAFGTAHRAHASTEGVTKFLKPSVAGFLLQKELDYLVGAVSNPKRPFAAIVGGSKVSSKIGVIESLLEKCDILLLGGGMIFTFYKAQGLSVGSSLVEEDKLELATTLLAKAKARGVSLLLPTDVVIADKFAPDANSKIVPASAIPDGWMGLDIGPDSVKTFNEALDTTQTVIWNGPMGVFEFEKFAKGTEAVANKLAELSKKGVTTIIGGGDSVAAVEKVGVAGVMSHISTGGGASLELLEGKVLPGVVALDEATPVTV.

A chloroplast-targeting transit peptide spans 1 to 74 (MASTAATAAL…GKGARGVITM (74 aa)). A Phosphoserine modification is found at Ser78. (2R)-3-phosphoglycerate is bound by residues Ala96, Asp97, Asn99, Arg113, Thr135, His136, Gly138, Arg139, Arg194, His226, and Arg227. An ADP-binding site is contributed by Gly272. CDP is bound at residue Gly272. 2 residues coordinate AMP: Lys274 and Lys278. Lys278 contacts ATP. Residue Gly296 participates in ADP binding. A CDP-binding site is contributed by Gly296. 2 residues coordinate AMP: Gly297 and Gly369. ATP contacts are provided by Gly297 and Gly369. CDP contacts are provided by Gly394 and Phe399. Residue Phe399 participates in ADP binding. Residue Glu400 participates in AMP binding. ATP-binding residues include Glu400, Asp431, and Ser432. Mg(2+) is bound at residue Asp431.

The protein belongs to the phosphoglycerate kinase family. Monomer. Mg(2+) serves as cofactor.

The protein resides in the plastid. It localises to the chloroplast. It catalyses the reaction (2R)-3-phosphoglycerate + ATP = (2R)-3-phospho-glyceroyl phosphate + ADP. It participates in carbohydrate biosynthesis; Calvin cycle. The chain is Phosphoglycerate kinase 2, chloroplastic from Arabidopsis thaliana (Mouse-ear cress).